The primary structure comprises 97 residues: Large ribosomal subunit protein eL30 (97 aa).

It belongs to the eukaryotic ribosomal protein eL30 family.

The sequence is that of Large ribosomal subunit protein eL30 from Methanoregula boonei (strain DSM 21154 / JCM 14090 / 6A8).